The sequence spans 758 residues: Glucan endo-1,3-beta-D-glucosidase (758 aa).

Positions 1 to 34 (MSHASRRRWRRATTSAATAALLCGALLTFPSAPA) form a signal peptide, tat-type signal. The interval 38-251 (VRLGSGSYTT…SGYASVALLP (214 aa)) is beta-sandwich subdomain. The region spanning 38-704 (VRLGSGSYTT…QWLSTLAEFG (667 aa)) is the GH81 domain. Positions 252–342 (SPDDFDRYAP…EGDRFTTELT (91 aa)) are alpha/beta subdomain. The interval 352-704 (TVDSADHQRL…QWLSTLAEFG (353 aa)) is (alpha/beta)6 barrel subdomain. (1,3-beta-D-glucosyl)n contacts are provided by Tyr-382, Lys-386, Asp-457, His-461, Asn-532, Glu-534, and Glu-538. The active site involves Asp-457. Residues Glu-534 and Glu-538 contribute to the active site.

Belongs to the glycosyl hydrolase 81 family. Predicted to be exported by the Tat system. The position of the signal peptide cleavage has not been experimentally proven.

The protein resides in the secreted. It carries out the reaction Hydrolysis of (1-&gt;3)-beta-D-glucosidic linkages in (1-&gt;3)-beta-D-glucans.. Functionally, cleaves internal linkages in 1,3-beta-glucan. May contribute to biomass degradation by hydrolyzing the 1,3-beta-linked plant polymer callose that is present in decomposing plant tissue. The protein is Glucan endo-1,3-beta-D-glucosidase of Thermobifida fusca (strain YX).